Here is a 147-residue protein sequence, read N- to C-terminus: uncharacterized protein (147 aa).

The helical transmembrane segment at 13–35 (NSRINLLGILVLNVVCGKSSIFF) threads the bilayer.

Its subcellular location is the membrane. This is an uncharacterized protein from Saccharomyces cerevisiae (strain ATCC 204508 / S288c) (Baker's yeast).